Reading from the N-terminus, the 496-residue chain is MRSALPLVLFSLVALCGRGDCRVANAEEKLMDDLLNKTRYNNLIRPATSSSQLISIQLQLSLAQLISVNEREQIMTTNIWLKQEWTDYRLAWNSSRYEGVNILRIPANRVWLPDIVLYNNADGSYEVSLYTNVVVRSNGSVMWLPPAICKSACKIEVKHFPFDQQNCTLKFRSWTYDHTEIDMVLKMPTASMDDFTPSGEWDIVALPGRRTVNPQDPSYVDVTYDFIIKRKPLFYTINLIIPCVLITSLAILVFYLPSDCGEKMTLCISVLLALTVFLLLISKIVPPTSLNVPLIGKYLMFTMVLVTFSIVTSVCVLNVHHRSPSTHTMAPWVKRCFLHKLPTFLFIKRPRQQPSRAPQSSLARLTKSEATTTTTLAMGPTSSSNLYGNSMYFVNPGLAAPKSPVASDSAGIPRDFRLRSSGRFRQDVQEALEGVSFIAQHMKSDDLDQSVIEDWKYVAMVVDRLFLWVFVVVCVLGTVGLFLPPLFQTHTPSEEP.

The signal sequence occupies residues 1–19 (MRSALPLVLFSLVALCGRG). The Extracellular portion of the chain corresponds to 20-236 (DCRVANAEEK…IIKRKPLFYT (217 aa)). N-linked (GlcNAc...) asparagine glycosylation is found at asparagine 36, asparagine 93, asparagine 138, and asparagine 166. The cysteines at positions 153 and 167 are disulfide-linked. The helical transmembrane segment at 237–257 (INLIIPCVLITSLAILVFYLP) threads the bilayer. Residues 258–265 (SDCGEKMT) are Cytoplasmic-facing. Na(+) is bound at residue glutamate 262. The chain crosses the membrane as a helical span at residues 266–286 (LCISVLLALTVFLLLISKIVP). The Extracellular portion of the chain corresponds to 287 to 298 (PTSLNVPLIGKY). The chain crosses the membrane as a helical span at residues 299–319 (LMFTMVLVTFSIVTSVCVLNV). Over 320 to 464 (HHRSPSTHTM…WKYVAMVVDR (145 aa)) the chain is Cytoplasmic. A helical membrane pass occupies residues 465 to 485 (LFLWVFVVVCVLGTVGLFLPP). The Extracellular segment spans residues 486–496 (LFQTHTPSEEP).

This sequence belongs to the ligand-gated ion channel (TC 1.A.9) family. Acetylcholine receptor (TC 1.A.9.1) subfamily. Beta-4/CHRNB4 sub-subfamily. As to quaternary structure, neuronal AChR is composed of two different types of subunits: alpha and beta. CHRNB4/Beta-4 subunit can be combined to CHRNA2/alpha-2, CHRNA3/alpha-3 or CHRNA4/alpha-4, CHRNA5/alpha-5 and CHRNB3/beta-3 to give rise to functional receptors. Forms stoichiometries such as (CHRNA3)2:(CHRNB4)3 or (CHRNA3:CHRNB4)2:CHRNB3. Interacts with RIC3; which is required for proper folding and assembly. Interacts with LYPD6.

Its subcellular location is the synaptic cell membrane. It is found in the cell membrane. The enzyme catalyses Ca(2+)(in) = Ca(2+)(out). It catalyses the reaction K(+)(in) = K(+)(out). The catalysed reaction is Na(+)(in) = Na(+)(out). In terms of biological role, component of neuronal acetylcholine receptors (nAChRs) that function as pentameric, ligand-gated cation channels with high calcium permeability among other activities. nAChRs are excitatory neurotrasnmitter receptors formed by a collection of nAChR subunits known to mediate synaptic transmission in the nervous system and the neuromuscular junction. Each nAchR subunit confers differential attributes to channel properties, including activation, deactivation and desensitization kinetics, pH sensitivity, cation permeability, and binding to allosteric modulators. CHRNB4 forms heteropentameric neuronal acetylcholine receptors with CHRNA2, CHRNA3 and CHRNA4, as well as CHRNA5 and CHRNB3 as accesory subunits. CHRNA3:CHRNB4 being predominant in neurons of the autonomic ganglia, it is known as ganglionic nicotinic receptor. CHRNA3:CHRNB4 or CHRNA3:CHRNA5:CHRNB4 play also an important role in the habenulo-interpeduncular tract, modulating the mesolimbic dopamine system and affecting reward circuits and addiction. Hypothalamic CHRNA3:CHRNB4 nAChR activation by nicotine leads to activation of POMC neurons and a decrease in food intake. In Bos taurus (Bovine), this protein is Neuronal acetylcholine receptor subunit beta-4 (CHRNB4).